Here is a 247-residue protein sequence, read N- to C-terminus: Transmembrane protein 33 (247 aa).

Ala-2 is modified (N-acetylalanine). At 2 to 31 (ADTTPNGPQGAGAVQFMMTNKLDTAMWLSR) the chain is on the lumenal side. The chain crosses the membrane as a helical span at residues 32–52 (LFTVYCSALFVLPLLGLHEAA). The Cytoplasmic portion of the chain corresponds to 53 to 100 (SFYQRALLANALTSALRLHQRLPHFQLSRAFLAQALLEDSCHYLLYSL). The helical transmembrane segment at 101–121 (IFVNSYPVTMSIFPVLLFSLL) threads the bilayer. At 122–155 (HAATYTKKVLDAKGSNSLPLLRSFLDKLSTNQQN) the chain is on the lumenal side. The helical transmembrane segment at 156–176 (ILKFIACNEIFLMPATVFMLF) threads the bilayer. Topologically, residues 177–247 (SGQGSLLQPF…FISRLAPTVA (71 aa)) are cytoplasmic.

This sequence belongs to the PER33/POM33 family. In terms of assembly, interacts with EIF2AK3. Interacts with RTN1, RTN2, RTN3, RTN4 and ARL6IP1. Interacts with RNF5. Interacts with RNF26. Interacts with PKD2.

It localises to the endoplasmic reticulum membrane. The protein resides in the melanosome. The protein localises to the nucleus envelope. In terms of biological role, acts as a regulator of the tubular endoplasmic reticulum (ER) network by modulating intracellular calcium homeostasis. Mechanistically, stimulates PKD2 calcium-dependent activity. Suppresses the RTN3/4-induced formation of the ER tubules. Positively regulates PERK-mediated and IRE1-mediated unfolded protein response signaling. Plays an essential role in VEGF-mediated release of Ca(2+) from ER stores during angiogenesis. Also plays a role in the modulation of innate immune signaling through the cGAS-STING pathway by interacting with RNF26. Participates in lipid metabolism by acting as a downstream effector of the pyruvate kinase/PKM. Forms a complex with RNF5 to facilitate polyubiquitination and subsequent degradation of SCAP on the ER membrane. The polypeptide is Transmembrane protein 33 (Tmem33) (Mus musculus (Mouse)).